The sequence spans 92 residues: Acylphosphatase (92 aa).

The Acylphosphatase-like domain occupies Arg-5–Trp-92. Active-site residues include Arg-20 and Asn-38.

This sequence belongs to the acylphosphatase family.

The catalysed reaction is an acyl phosphate + H2O = a carboxylate + phosphate + H(+). This is Acylphosphatase (acyP) from Chloroflexus aurantiacus (strain ATCC 29366 / DSM 635 / J-10-fl).